A 342-amino-acid polypeptide reads, in one-letter code: Glycerol-1-phosphate dehydrogenase [NAD(P)+] (342 aa).

Residues 84–88 (GRPID) and 106–109 (TAAS) each bind NAD(+). A substrate-binding site is contributed by Asp111. Residue Ser115 participates in NAD(+) binding. Asp160 lines the substrate pocket. Zn(2+)-binding residues include Asp160 and His241. A substrate-binding site is contributed by His245. His260 lines the Zn(2+) pocket.

This sequence belongs to the glycerol-1-phosphate dehydrogenase family. In terms of assembly, homodimer. The cofactor is Zn(2+).

Its subcellular location is the cytoplasm. It carries out the reaction sn-glycerol 1-phosphate + NAD(+) = dihydroxyacetone phosphate + NADH + H(+). The enzyme catalyses sn-glycerol 1-phosphate + NADP(+) = dihydroxyacetone phosphate + NADPH + H(+). It participates in membrane lipid metabolism; glycerophospholipid metabolism. In terms of biological role, catalyzes the NAD(P)H-dependent reduction of dihydroxyacetonephosphate (DHAP or glycerone phosphate) to glycerol 1-phosphate (G1P). The G1P thus generated is used as the glycerophosphate backbone of phospholipids in the cellular membranes of Archaea. The protein is Glycerol-1-phosphate dehydrogenase [NAD(P)+] of Pyrobaculum aerophilum (strain ATCC 51768 / DSM 7523 / JCM 9630 / CIP 104966 / NBRC 100827 / IM2).